The primary structure comprises 440 residues: UDP-glucose 6-dehydrogenase YwqF (440 aa).

NAD(+)-binding positions include 2-19 (NITV…GVSL), valine 11, aspartate 30, lysine 35, threonine 121, and glutamate 155. Residues 151-155 (EFLRE), lysine 204, asparagine 208, 249-253 (FLKAG), and glycine 257 contribute to the substrate site. Cysteine 260 (nucleophile) is an active-site residue. Position 263 (lysine 263) interacts with NAD(+). Residue lysine 320 coordinates substrate. NAD(+) is bound at residue arginine 327.

It belongs to the UDP-glucose/GDP-mannose dehydrogenase family. Phosphorylated on tyrosine residue(s). Phosphorylated by YwqD and dephosphorylated by YwqE in vitro.

Its subcellular location is the cytoplasm. The enzyme catalyses UDP-alpha-D-glucose + 2 NAD(+) + H2O = UDP-alpha-D-glucuronate + 2 NADH + 3 H(+). The protein operates within nucleotide-sugar biosynthesis; UDP-alpha-D-glucuronate biosynthesis; UDP-alpha-D-glucuronate from UDP-alpha-D-glucose: step 1/1. Its activity is regulated as follows. Competitively inhibited by UDP-glucose. Activated by phosphorylation, which may increase affinity for NAD(+); inhibited by dephosphorylation. In terms of biological role, catalyzes the conversion of UDP-glucose into UDP-glucuronate, one of the precursors of teichuronic acid. The sequence is that of UDP-glucose 6-dehydrogenase YwqF (ywqF) from Bacillus subtilis (strain 168).